We begin with the raw amino-acid sequence, 582 residues long: Arginine--tRNA ligase (582 aa).

A 'HIGH' region motif is present at residues 128–138; the sequence is PNLAKEMHVGH.

It belongs to the class-I aminoacyl-tRNA synthetase family. As to quaternary structure, monomer.

The protein localises to the cytoplasm. It carries out the reaction tRNA(Arg) + L-arginine + ATP = L-arginyl-tRNA(Arg) + AMP + diphosphate. In Colwellia psychrerythraea (strain 34H / ATCC BAA-681) (Vibrio psychroerythus), this protein is Arginine--tRNA ligase.